A 265-amino-acid chain; its full sequence is Protein Pars_0096 (265 aa).

Belongs to the CinA family.

This is Protein Pars_0096 from Pyrobaculum arsenaticum (strain DSM 13514 / JCM 11321 / PZ6).